A 154-amino-acid chain; its full sequence is Ribonuclease H (154 aa).

One can recognise an RNase H type-1 domain in the interval 1–142; sequence MQKQIEIFTD…CDELAKKGAE (142 aa). The Mg(2+) site is built by Asp10, Glu48, Asp70, and Asp134.

Belongs to the RNase H family. In terms of assembly, monomer. It depends on Mg(2+) as a cofactor.

The protein localises to the cytoplasm. The enzyme catalyses Endonucleolytic cleavage to 5'-phosphomonoester.. Functionally, endonuclease that specifically degrades the RNA of RNA-DNA hybrids. In Haemophilus influenzae (strain 86-028NP), this protein is Ribonuclease H.